The following is a 438-amino-acid chain: Serine hydroxymethyltransferase (438 aa).

(6S)-5,6,7,8-tetrahydrofolate is bound by residues Leu133 and 137–139 (GHL). Lys242 is subject to N6-(pyridoxal phosphate)lysine.

This sequence belongs to the SHMT family. Homodimer. Pyridoxal 5'-phosphate serves as cofactor.

The protein resides in the cytoplasm. It carries out the reaction (6R)-5,10-methylene-5,6,7,8-tetrahydrofolate + glycine + H2O = (6S)-5,6,7,8-tetrahydrofolate + L-serine. It participates in one-carbon metabolism; tetrahydrofolate interconversion. Its pathway is amino-acid biosynthesis; glycine biosynthesis; glycine from L-serine: step 1/1. Its function is as follows. Catalyzes the reversible interconversion of serine and glycine with tetrahydrofolate (THF) serving as the one-carbon carrier. This reaction serves as the major source of one-carbon groups required for the biosynthesis of purines, thymidylate, methionine, and other important biomolecules. Also exhibits THF-independent aldolase activity toward beta-hydroxyamino acids, producing glycine and aldehydes, via a retro-aldol mechanism. The protein is Serine hydroxymethyltransferase of Brucella melitensis biotype 2 (strain ATCC 23457).